The following is a 594-amino-acid chain: Lysine--tRNA ligase cla4 (594 aa).

A disordered region spans residues 1–62; sequence MADPGAVKET…KETSSEQDEA (62 aa). A compositionally biased stretch (basic and acidic residues) spans 18–42; that stretch reads TGEKVSKTELKKRLKSRAKEAEKQK.

Belongs to the class-II aminoacyl-tRNA synthetase family. As to quaternary structure, homodimer.

The catalysed reaction is tRNA(Lys) + L-lysine + ATP = L-lysyl-tRNA(Lys) + AMP + diphosphate. Involved in self-resistance to cladosporin since this product is an inhibitor of lysyl-tRNA synthetase. Cla4 may not be inhibited by cladosporin, thereby imparting cladosporin resistance. When cladosporin biosynthesis is switched on, transcription of cla4 will then be necessary for continued protein synthesis in C.cladosporioides. In Cladosporium cladosporioides, this protein is Lysine--tRNA ligase cla4.